Consider the following 342-residue polypeptide: Aspartate carbamoyltransferase catalytic subunit (342 aa).

Residues R54 and T55 each contribute to the carbamoyl phosphate site. An L-aspartate-binding site is contributed by K82. Positions 104, 134, and 137 each coordinate carbamoyl phosphate. Residues R177 and R232 each contribute to the L-aspartate site. Residues G277 and P278 each coordinate carbamoyl phosphate.

This sequence belongs to the aspartate/ornithine carbamoyltransferase superfamily. ATCase family. In terms of assembly, heterododecamer (2C3:3R2) of six catalytic PyrB chains organized as two trimers (C3), and six regulatory PyrI chains organized as three dimers (R2).

It catalyses the reaction carbamoyl phosphate + L-aspartate = N-carbamoyl-L-aspartate + phosphate + H(+). The protein operates within pyrimidine metabolism; UMP biosynthesis via de novo pathway; (S)-dihydroorotate from bicarbonate: step 2/3. Catalyzes the condensation of carbamoyl phosphate and aspartate to form carbamoyl aspartate and inorganic phosphate, the committed step in the de novo pyrimidine nucleotide biosynthesis pathway. This Pseudarthrobacter chlorophenolicus (strain ATCC 700700 / DSM 12829 / CIP 107037 / JCM 12360 / KCTC 9906 / NCIMB 13794 / A6) (Arthrobacter chlorophenolicus) protein is Aspartate carbamoyltransferase catalytic subunit.